We begin with the raw amino-acid sequence, 394 residues long: Elongation factor Tu 2 (394 aa).

The tr-type G domain occupies 10–204 (KPHVNVGTIG…ALDSYIPEPE (195 aa)). The segment at 19 to 26 (GHVDHGKT) is G1. A GTP-binding site is contributed by 19–26 (GHVDHGKT). Threonine 26 serves as a coordination point for Mg(2+). Residues 60–64 (GITIN) are G2. The G3 stretch occupies residues 81-84 (DCPG). GTP is bound by residues 81–85 (DCPGH) and 136–139 (NKCD). The segment at 136–139 (NKCD) is G4. The segment at 174 to 176 (SAL) is G5.

This sequence belongs to the TRAFAC class translation factor GTPase superfamily. Classic translation factor GTPase family. EF-Tu/EF-1A subfamily. As to quaternary structure, monomer.

It localises to the cytoplasm. It catalyses the reaction GTP + H2O = GDP + phosphate + H(+). Its function is as follows. GTP hydrolase that promotes the GTP-dependent binding of aminoacyl-tRNA to the A-site of ribosomes during protein biosynthesis. The chain is Elongation factor Tu 2 from Shewanella oneidensis (strain ATCC 700550 / JCM 31522 / CIP 106686 / LMG 19005 / NCIMB 14063 / MR-1).